The chain runs to 165 residues: Regulator of ribonuclease activity A (165 aa).

It belongs to the RraA family. In terms of assembly, homotrimer. Binds to both RNA-binding sites in the C-terminal region of Rne and to RhlB.

It localises to the cytoplasm. Globally modulates RNA abundance by binding to RNase E (Rne) and regulating its endonucleolytic activity. Can modulate Rne action in a substrate-dependent manner by altering the composition of the degradosome. Modulates RNA-binding and helicase activities of the degradosome. In Haemophilus ducreyi (strain 35000HP / ATCC 700724), this protein is Regulator of ribonuclease activity A.